The following is a 498-amino-acid chain: Glycerol kinase (498 aa).

Thr-12 contributes to the ADP binding site. 3 residues coordinate ATP: Thr-12, Thr-13, and Ser-14. Thr-12 lines the sn-glycerol 3-phosphate pocket. An ADP-binding site is contributed by Arg-16. Sn-glycerol 3-phosphate contacts are provided by Arg-82, Glu-83, Tyr-134, and Asp-244. Arg-82, Glu-83, Tyr-134, Asp-244, and Gln-245 together coordinate glycerol. The ADP site is built by Thr-266 and Gly-310. Residues Thr-266, Gly-310, Gln-314, and Gly-411 each contribute to the ATP site. ADP-binding residues include Gly-411 and Asn-415.

It belongs to the FGGY kinase family.

It carries out the reaction glycerol + ATP = sn-glycerol 3-phosphate + ADP + H(+). Its pathway is polyol metabolism; glycerol degradation via glycerol kinase pathway; sn-glycerol 3-phosphate from glycerol: step 1/1. With respect to regulation, inhibited by fructose 1,6-bisphosphate (FBP). Functionally, key enzyme in the regulation of glycerol uptake and metabolism. Catalyzes the phosphorylation of glycerol to yield sn-glycerol 3-phosphate. The chain is Glycerol kinase from Chloroflexus aggregans (strain MD-66 / DSM 9485).